The primary structure comprises 1139 residues: Solute carrier family 12 member 5 (1139 aa).

Disordered regions lie at residues 1–62 (MSRR…KGRE) and 95–116 (PQGS…KPVQ). The Cytoplasmic segment spans residues 1–98 (MSRRFTVTSL…ANYTNLPQGS (98 aa)). A compositionally biased stretch (basic and acidic residues) spans 21-45 (PESRRHSVADPRRLPREDVKGDGNP). Over residues 46–55 (KESSPFINST) the composition is skewed to polar residues. Thr57 bears the Phosphothreonine mark. Residues 98–111 (SKEHEEAENNEGGK) are compositionally biased toward basic and acidic residues. Residues 99–120 (KEHEEAENNEGGKKKPVQAPRM) form a discontinuously helical membrane-spanning segment. Lys113 is a binding site for K(+). Topologically, residues 121 to 129 (GTFMGVYLP) are extracellular. The helical transmembrane segment at 130–151 (CLQNIFGVILFLRLTWVVGIAG) threads the bilayer. Over 152–174 (IMESFCMVFICCSCTMLTAISMS) the chain is Cytoplasmic. Residues 175–203 (AIATNGVVPAGGSYYMISRSLGPEFGGAV) traverse the membrane as a helical segment. A chloride-binding site is contributed by Ala184. The Extracellular portion of the chain corresponds to 204–229 (GLCFYLGTTFAGAMYILGTIEILLAY). The next 2 membrane-spanning stretches (helical) occupy residues 230–250 (LFPA…AAML) and 251–276 (NNMR…KYVN). Over 277–402 (KFALVFLGCV…ERRGMPSVGL (126 aa)) the chain is Extracellular. Cys310 and Cys325 form a disulfide bridge. Residues Asn314, Asn333, Asn351, and Asn362 are each glycosylated (N-linked (GlcNAc...) asparagine). Cysteines 345 and 354 form a disulfide. The chain crosses the membrane as a helical span at residues 403–420 (ADGTPVDMDHPYVFSDMT). A K(+)-binding site is contributed by Met410. 2 residues coordinate chloride: Tyr414 and Val415. Over 421 to 429 (SYFTLLVGI) the chain is Cytoplasmic. The chain crosses the membrane as a helical span at residues 430 to 453 (YFPSVTGIMAGSNRSGDLRDAQKS). Asp446 contributes to the K(+) binding site. The Extracellular segment spans residues 454–485 (IPTGTILAIATTSAVYISSVVLFGACIEGVVL). The helical transmembrane segment at 486 to 513 (RDKFGEAVNGNLVVGTLAWPSPWVIVIG) threads the bilayer. The Cytoplasmic portion of the chain corresponds to 514–534 (SFFSTCGAGLQSLTGAPRLLQ). Helical transmembrane passes span 535 to 555 (AISR…KANG) and 556 to 578 (EPTW…ASLD). Chloride is bound at residue Glu569. The Cytoplasmic portion of the chain corresponds to 579-592 (EVAPILSMFFLMCY). 2 helical membrane-spanning segments follow: residues 593–615 (MFVN…PRFR) and 616–632 (YYHW…CLAL). The Cytoplasmic portion of the chain corresponds to 633–1139 (MFICSWYYAL…GGREVITIYS (507 aa)). Positions 667–681 (GIRGLSLSAARYALL) are scissor helix. Thr929 carries the phosphothreonine; by OXSR1 and STK39 modification. Residues 943–1025 (HLTKNERERE…PEGEGETDPE (83 aa)) are disordered. Positions 945-962 (TKNEREREIQSITDESRG) are enriched in basic and acidic residues. The span at 982–994 (TACDNEEKPEEEV) shows a compositional bias: acidic residues. The span at 1003–1012 (PSCPSSSPSP) shows a compositional bias: low complexity. Thr1030 carries the phosphothreonine; by OXSR1 and STK39 modification. The tract at residues 1033 to 1052 (KDKSAAQKNKGPSPVSSEGI) is disordered. Phosphoserine occurs at positions 1045, 1048, and 1049.

The protein belongs to the SLC12A transporter family. K/Cl co-transporter subfamily. In terms of assembly, homodimer; adopts a domain-swap conformation at the scissor helices connecting the transmembrane domain and C-terminal domain. Heterodimer wHeterodimer with K-Cl cotransporters SLC12A6 and SLC12A7. Interacts with AP2A1. Post-translationally, phosphorylated at Thr-929 and Thr-1030 by OXSR1/OSR1 and STK39/SPAK downstream of WNK kinases (WNK1, WNK2, WNK3 or WNK4), inhibiting the potassium-chloride cotransport activity. Highly expressed in brain. Not detected in other tissues. Highly expressed in pyramidal neurons and in neurons throughout the cortex, hippocampus, the granular layer of the cerebellum and in groups of neurons throughout the brainstem. Barely detectable in dorsal-root ganglions.

The protein resides in the cell membrane. It localises to the cell projection. Its subcellular location is the dendrite. The catalysed reaction is K(+)(in) + chloride(in) = K(+)(out) + chloride(out). With respect to regulation, inhibited following phosphorylation by OXSR1/OSR1 and STK39/SPAK: phosphorylation takes place downstream of WNK kinases (WNK1, WNK2, WNK3 or WNK4) in response to hyperosmotic stress and subsequent cell shrinkage. In terms of biological role, mediates electroneutral potassium-chloride cotransport in mature neurons and is required for neuronal Cl(-) homeostasis. As major extruder of intracellular chloride, it establishes the low neuronal Cl(-) levels required for chloride influx after binding of GABA-A and glycine to their receptors, with subsequent hyperpolarization and neuronal inhibition. Involved in the regulation of dendritic spine formation and maturation. This Rattus norvegicus (Rat) protein is Solute carrier family 12 member 5 (Slc12a5).